Consider the following 243-residue polypeptide: Venom nerve growth factor (243 aa).

A signal peptide spans 1-18 (MSMLCYTLIIAFLIGIWA). A propeptide spanning residues 19–125 (APKSEDNVPL…TLNRNIRTKR (107 aa)) is cleaved from the precursor. The interval 45–66 (HEGLKTSRNTDQRHLAPKKAED) is disordered. Positions 46–66 (EGLKTSRNTDQRHLAPKKAED) are enriched in basic and acidic residues. 3 cysteine pairs are disulfide-bonded: Cys139–Cys204, Cys182–Cys232, and Cys192–Cys234. N-linked (GlcNAc...) asparagine glycosylation occurs at Asn148.

The protein belongs to the NGF-beta family. Homodimer; non-covalently linked. In terms of tissue distribution, expressed by the venom gland.

Its subcellular location is the secreted. Nerve growth factor is important for the development and maintenance of the sympathetic and sensory nervous systems. It stimulates division and differentiation of sympathetic and embryonic sensory neurons as well as basal forebrain cholinergic neurons in the brain. Its relevance in the snake venom is not clear. However, it has been shown to inhibit metalloproteinase-dependent proteolysis of platelet glycoprotein Ib alpha, suggesting a metalloproteinase inhibition to prevent metalloprotease autodigestion and/or protection against prey proteases. Binds a lipid between the two protein chains in the homodimer. The lipid-bound form promotes histamine relase from mouse mast cells, contrary to the lipid-free form. This Cryptophis nigrescens (Eastern small-eyed snake) protein is Venom nerve growth factor.